We begin with the raw amino-acid sequence, 118 residues long: Cysteine--tRNA ligase (118 aa).

Cys28 contacts Zn(2+). The short motif at 30 to 40 (PTVYNYIHIGN) is the 'HIGH' region element.

It belongs to the class-I aminoacyl-tRNA synthetase family. As to quaternary structure, monomer. Requires Zn(2+) as cofactor.

The protein localises to the cytoplasm. It catalyses the reaction tRNA(Cys) + L-cysteine + ATP = L-cysteinyl-tRNA(Cys) + AMP + diphosphate. The sequence is that of Cysteine--tRNA ligase (cysS) from Staphylococcus xylosus.